We begin with the raw amino-acid sequence, 177 residues long: Transcription antitermination protein NusB (177 aa).

The tract at residues 1 to 35 (MTDSANPTPSARPPRQPRTGTTGTGARKAGSKSGR) is disordered. Over residues 17-28 (PRTGTTGTGARK) the composition is skewed to low complexity.

It belongs to the NusB family.

Its function is as follows. Involved in transcription antitermination. Required for transcription of ribosomal RNA (rRNA) genes. Binds specifically to the boxA antiterminator sequence of the ribosomal RNA (rrn) operons. The polypeptide is Transcription antitermination protein NusB (Acidovorax ebreus (strain TPSY) (Diaphorobacter sp. (strain TPSY))).